Here is a 381-residue protein sequence, read N- to C-terminus: Queuine tRNA-ribosyltransferase (381 aa).

The active-site Proton acceptor is aspartate 96. Substrate-binding positions include 96–100 (DSGGF), aspartate 150, glutamine 193, and glycine 220. The tract at residues 251-257 (GVGSPDS) is RNA binding. Catalysis depends on aspartate 270, which acts as the Nucleophile. Residues 275–279 (TRIAR) form an RNA binding; important for wobble base 34 recognition region. Cysteine 308, cysteine 310, cysteine 313, and histidine 339 together coordinate Zn(2+).

This sequence belongs to the queuine tRNA-ribosyltransferase family. Homodimer. Within each dimer, one monomer is responsible for RNA recognition and catalysis, while the other monomer binds to the replacement base PreQ1. Requires Zn(2+) as cofactor.

It catalyses the reaction 7-aminomethyl-7-carbaguanine + guanosine(34) in tRNA = 7-aminomethyl-7-carbaguanosine(34) in tRNA + guanine. It functions in the pathway tRNA modification; tRNA-queuosine biosynthesis. In terms of biological role, catalyzes the base-exchange of a guanine (G) residue with the queuine precursor 7-aminomethyl-7-deazaguanine (PreQ1) at position 34 (anticodon wobble position) in tRNAs with GU(N) anticodons (tRNA-Asp, -Asn, -His and -Tyr). Catalysis occurs through a double-displacement mechanism. The nucleophile active site attacks the C1' of nucleotide 34 to detach the guanine base from the RNA, forming a covalent enzyme-RNA intermediate. The proton acceptor active site deprotonates the incoming PreQ1, allowing a nucleophilic attack on the C1' of the ribose to form the product. After dissociation, two additional enzymatic reactions on the tRNA convert PreQ1 to queuine (Q), resulting in the hypermodified nucleoside queuosine (7-(((4,5-cis-dihydroxy-2-cyclopenten-1-yl)amino)methyl)-7-deazaguanosine). The chain is Queuine tRNA-ribosyltransferase from Bacillus pumilus (strain SAFR-032).